Reading from the N-terminus, the 402-residue chain is Nicotinate phosphoribosyltransferase (402 aa).

His224 is modified (phosphohistidine; by autocatalysis).

This sequence belongs to the NAPRTase family. Transiently phosphorylated on a His residue during the reaction cycle. Phosphorylation strongly increases the affinity for substrates and increases the rate of nicotinate D-ribonucleotide production. Dephosphorylation regenerates the low-affinity form of the enzyme, leading to product release.

The enzyme catalyses nicotinate + 5-phospho-alpha-D-ribose 1-diphosphate + ATP + H2O = nicotinate beta-D-ribonucleotide + ADP + phosphate + diphosphate. The protein operates within cofactor biosynthesis; NAD(+) biosynthesis; nicotinate D-ribonucleotide from nicotinate: step 1/1. Functionally, catalyzes the synthesis of beta-nicotinate D-ribonucleotide from nicotinate and 5-phospho-D-ribose 1-phosphate at the expense of ATP. The chain is Nicotinate phosphoribosyltransferase from Neisseria meningitidis serogroup B (strain ATCC BAA-335 / MC58).